Reading from the N-terminus, the 118-residue chain is uncharacterized protein (118 aa).

This is an uncharacterized protein from Saccharomyces cerevisiae (strain ATCC 204508 / S288c) (Baker's yeast).